The following is an 8892-amino-acid chain: Nonribosomal peptide synthetase 32 (8892 aa).

The region spanning 12–85 (EPSKLVLGRV…QLAESIAQQN (74 aa)) is the Carrier 1 domain. Position 46 is an O-(pantetheine 4'-phosphoryl)serine (serine 46). Residues 88 to 112 (AGNGVNGHANGNGMNGNGLHNEATI) form a disordered region. Low complexity predominate over residues 93–108 (NGHANGNGMNGNGLHN). Positions 567–956 (PTSANVPRRV…EGVDLSVRDF (390 aa)) are condensation 1. The segment at 989-1386 (KMAEQPEALA…GRIDSQIKIR (398 aa)) is adenylation 1. Residues 1523–1599 (ISATAVEREL…ELAAEVQATQ (77 aa)) enclose the Carrier 2 domain. Serine 1560 carries the O-(pantetheine 4'-phosphoryl)serine modification. The tract at residues 1609-2039 (GAIALSPIQQ…YGQTVKSLVN (431 aa)) is epimerization 1. Residues 2083 to 2518 (EDILPCSPIQ…LLLPAEEAKL (436 aa)) form a condensation 2 region. The adenylation 2 stretch occupies residues 2543–2934 (SQPEALAVSA…GRRDTQVKIR (392 aa)). One can recognise a Carrier 3 domain in the interval 3061-3137 (SSATPIEREL…ELAANSQTGR (77 aa)). Position 3098 is an O-(pantetheine 4'-phosphoryl)serine (serine 3098). Positions 3153–3590 (LSPIQQMFFD…GDTVKTLVEE (438 aa)) are epimerization 2. Residues 3634-4061 (EDILPCSAIQ…NVDRPLRELT (428 aa)) are condensation 3. Residues 4098-4488 (TLPEALAISS…GRIDSQIKIR (391 aa)) form an adenylation 3 region. One can recognise a Carrier 4 domain in the interval 4627-4703 (APTTDLERKL…DLSRVVEEKC (77 aa)). At serine 4664 the chain carries O-(pantetheine 4'-phosphoryl)serine. Residues 4760–5181 (EDVYPCSPMQ…LLTDEDCDQL (422 aa)) are condensation 4. The interval 5205 to 5605 (TSYPTAPAIS…GRRDTQVKIR (401 aa)) is adenylation 4. Residues 5745–5821 (MPTTPMEQKL…DLAEAMEEKG (77 aa)) form the Carrier 5 domain. Serine 5782 is subject to O-(pantetheine 4'-phosphoryl)serine. The condensation 5 stretch occupies residues 5868–6285 (EDVYPCSPLQ…LLSPGQMAQI (418 aa)). Positions 6307–6700 (QMTTRPAATA…GRIDTQIKIR (394 aa)) are adenylation 5. The Carrier 6 domain maps to 6834–6911 (ELTTTIERQL…ELATQTQTTE (78 aa)). Position 6872 is an O-(pantetheine 4'-phosphoryl)serine (serine 6872). The epimerization 3 stretch occupies residues 6923 to 7360 (NFQLSPIQQM…SYSCAIESLV (438 aa)). A condensation 6 region spans residues 7403-7834 (VQDILPCSPI…LLPAGDANQI (432 aa)). An adenylation 6 region spans residues 7855-8253 (QQMAAHPTAQ…LDRIGTQVKI (399 aa)). The region spanning 8380-8456 (APVGRNEEIL…AMAARVTADI (77 aa)) is the Carrier 7 domain. Residue serine 8417 is modified to O-(pantetheine 4'-phosphoryl)serine. Residues 8490–8878 (HFAFDATGPC…EIIEDSGCNV (389 aa)) form a condensation 7 region.

It belongs to the NRP synthetase family.

The protein operates within secondary metabolite biosynthesis. Functionally, nonribosomal peptide synthetase; part of the gene cluster that mediates the biosynthesis of the lipopeptides W493 A and B. W493 A and B consist of six amino acid residues D-allo-thr, L-Ala, D-Ala, L-Gln, D-Tyr, and L-Val/L-Ile linked to a 3-hydroxy-4-methyltetradecanoic acid polyketide chain. The biosynthesis starts with formation of the linear polyketide chain by the highly reducing polyketide synthase PKS40. The gene cluster contains a putative acyl-CoA ligase (FPSE_09184) for formation of a CoA thioester polyketide. The thiol bond could be hydrolyzed by the putative thioesterase (FPSE_09186) and then accepted by the first T domain in module 1 of NRPS32. The second T domain is responsible for accepting a threonine, which is adenylated by the A domain and epimerized to the D-allo-threonine formed by the E domain. The five successive modules incorporate Ala, Ala, Gln, Tyr, and Val/Ile into the final product, which is released by cyclization. This chain is Nonribosomal peptide synthetase 32, found in Fusarium pseudograminearum (strain CS3096) (Wheat and barley crown-rot fungus).